The chain runs to 326 residues: Guanine nucleotide-binding protein subunit beta-like protein 1 (326 aa).

WD repeat units lie at residues 17–61 (GTQS…IVTT), 64–104 (GHGG…NTIM), 159–202 (ARPG…VCSQ), 205–244 (CHEE…SLQV), 250–291 (LTNP…AVLA), and 292–325 (FHSA…LYPC).

As to expression, expressed at low levels in most tissues and highly expressed in adult testis. Widely expressed in adult brain with striking regional distribution in forebrain, midbrain, and hindbrain structures, including the thalamus, hypothalamus, amygdala, hippocampus, pons.

It localises to the cytoplasm. It is found in the nucleus. Its function is as follows. Acts as a critical regulator of DNA damage response (DDR) signaling via specifically regulating phosphatidylinositol 3-kinase-related protein kinase (PIKK) family proteins. This Mus musculus (Mouse) protein is Guanine nucleotide-binding protein subunit beta-like protein 1 (Gnb1l).